Reading from the N-terminus, the 191-residue chain is UPF0669 protein C6orf120 (191 aa).

The N-terminal stretch at 1–30 (MAAPRGRAAPWTTALLLLLASQVLSPGSCA) is a signal peptide. N-linked (GlcNAc...) asparagine glycosylation is present at Asn-53.

This sequence belongs to the UPF0669 family. In terms of tissue distribution, mainly expressed in hepatocytes and some weak expression in germinal center cells of lymph nodes.

The protein localises to the secreted. May be involved in induction of apoptosis in CD4(+) T-cells, but not CD8(+) T-cells or hepatocytes. The polypeptide is UPF0669 protein C6orf120 (C6orf120) (Homo sapiens (Human)).